A 490-amino-acid chain; its full sequence is Delta(14)-sterol reductase (490 aa).

7 helical membrane-spanning segments follow: residues 23-43 (FGGP…VHVF), 80-100 (VFGL…ALSL), 136-156 (LAIL…WTFI), 160-180 (FAQI…FVYV), 230-250 (EFME…AFIA), 255-275 (LYGY…FYVF), and 324-344 (QLGA…YSIF). NADP(+) contacts are provided by residues Lys351, Arg355, Ile378, Trp383, and 390 to 391 (NY). Residues 436 to 456 (ARGWGIVFTYFYILYFAILLI) traverse the membrane as a helical segment. Residues Asp462, 466 to 470 (CSKKY), and Tyr477 contribute to the NADP(+) site.

It belongs to the ERG4/ERG24 family.

The protein localises to the membrane. It catalyses the reaction 4,4-dimethyl-5alpha-cholesta-8,24-dien-3beta-ol + NADP(+) = 4,4-dimethyl-5alpha-cholesta-8,14,24-trien-3beta-ol + NADPH + H(+). It functions in the pathway steroid biosynthesis; zymosterol biosynthesis; zymosterol from lanosterol: step 2/6. In terms of biological role, reduces the C14=C15 double bond of 4,4-dimethyl-cholesta-8,14,24-trienol to produce 4,4-dimethyl-cholesta-8,24-dienol. The sequence is that of Delta(14)-sterol reductase (erg-3) from Neurospora crassa (strain ATCC 24698 / 74-OR23-1A / CBS 708.71 / DSM 1257 / FGSC 987).